Consider the following 1056-residue polypeptide: 120.7 kDa protein in NOF-FB transposable element (1056 aa).

The interval 716–749 (KTIKPTEGNDAEDNDTDDENKEMDLSEQPKEKPR) is disordered. Acidic residues predominate over residues 724–736 (NDAEDNDTDDENK). The segment covering 737 to 749 (EMDLSEQPKEKPR) has biased composition (basic and acidic residues).

The protein localises to the nucleus. May be involved in the transposition of NOF-FB and other FB elements. In Drosophila melanogaster (Fruit fly), this protein is 120.7 kDa protein in NOF-FB transposable element (NOF).